The primary structure comprises 157 residues: Transcription elongation factor GreA (157 aa).

A coiled-coil region spans residues 46–67; that stretch reads AEYHAARERQSFIEGRIKELED.

The protein belongs to the GreA/GreB family.

Functionally, necessary for efficient RNA polymerase transcription elongation past template-encoded arresting sites. The arresting sites in DNA have the property of trapping a certain fraction of elongating RNA polymerases that pass through, resulting in locked ternary complexes. Cleavage of the nascent transcript by cleavage factors such as GreA or GreB allows the resumption of elongation from the new 3'terminus. GreA releases sequences of 2 to 3 nucleotides. The chain is Transcription elongation factor GreA from Rhodospirillum rubrum (strain ATCC 11170 / ATH 1.1.1 / DSM 467 / LMG 4362 / NCIMB 8255 / S1).